A 383-amino-acid polypeptide reads, in one-letter code: Chorismate synthase (383 aa).

Positions 40 and 46 each coordinate NADP(+). Residues 128–130 (RAS), Gly-291, 306–310 (KPIPT), and Arg-332 each bind FMN.

The protein belongs to the chorismate synthase family. As to quaternary structure, homotetramer. It depends on FMNH2 as a cofactor.

The enzyme catalyses 5-O-(1-carboxyvinyl)-3-phosphoshikimate = chorismate + phosphate. The protein operates within metabolic intermediate biosynthesis; chorismate biosynthesis; chorismate from D-erythrose 4-phosphate and phosphoenolpyruvate: step 7/7. Functionally, catalyzes the anti-1,4-elimination of the C-3 phosphate and the C-6 proR hydrogen from 5-enolpyruvylshikimate-3-phosphate (EPSP) to yield chorismate, which is the branch point compound that serves as the starting substrate for the three terminal pathways of aromatic amino acid biosynthesis. This reaction introduces a second double bond into the aromatic ring system. The polypeptide is Chorismate synthase (Moorella thermoacetica (strain ATCC 39073 / JCM 9320)).